The following is an 805-amino-acid chain: Leucine--tRNA ligase (805 aa).

Residues Pro-40 to His-51 carry the 'HIGH' region motif. The 'KMSKS' region signature appears at Lys-576–Ser-580. Lys-579 lines the ATP pocket.

This sequence belongs to the class-I aminoacyl-tRNA synthetase family.

The protein resides in the cytoplasm. The enzyme catalyses tRNA(Leu) + L-leucine + ATP = L-leucyl-tRNA(Leu) + AMP + diphosphate. The polypeptide is Leucine--tRNA ligase (Ligilactobacillus salivarius (strain UCC118) (Lactobacillus salivarius)).